Here is a 240-residue protein sequence, read N- to C-terminus: Ribonuclease 3 (240 aa).

In terms of domain architecture, RNase III spans 10-136 (VREFQETVGV…LIGAVYLDRG (127 aa)). E49 contributes to the Mg(2+) binding site. The active site involves D53. Residues D122 and E125 each contribute to the Mg(2+) site. E125 is a catalytic residue. Positions 163–231 (DWKTSLQELT…AESAWKAIRA (69 aa)) constitute a DRBM domain. The interval 205–240 (TYGSGEGRSKKEAEQQAAESAWKAIRAATEKAKQES) is disordered. A compositionally biased stretch (low complexity) spans 219–228 (QQAAESAWKA).

This sequence belongs to the ribonuclease III family. Homodimer. The cofactor is Mg(2+).

The protein resides in the cytoplasm. It catalyses the reaction Endonucleolytic cleavage to 5'-phosphomonoester.. Functionally, digests double-stranded RNA. Involved in the processing of primary rRNA transcript to yield the immediate precursors to the large and small rRNAs (23S and 16S). Processes some mRNAs, and tRNAs when they are encoded in the rRNA operon. Processes pre-crRNA and tracrRNA of type II CRISPR loci if present in the organism. The chain is Ribonuclease 3 from Thermobifida fusca (strain YX).